Here is a 272-residue protein sequence, read N- to C-terminus: Dickkopf-related protein 1 (272 aa).

The N-terminal stretch at 1–31 is a signal peptide; that stretch reads MMVVCAAAAVRFLAVFTMMALCSLPLLGASA. Residue Ser62 is glycosylated (O-linked (GalNAc...) serine). 10 disulfide bridges follow: Cys86–Cys98, Cys92–Cys114, Cys117–Cys131, Cys124–Cys136, Cys130–Cys141, Cys195–Cys207, Cys201–Cys216, Cys206–Cys243, Cys226–Cys251, and Cys245–Cys269. Residues 86 to 141 are DKK-type Cys-1; the sequence is CAEDEECGSDEYCSSPSRGAAGVGGVQICLACRKRRKRCMRHAMCCPGNYCKNGIC. Residues 195–269 form a DKK-type Cys-2 region; that stretch reads CLRSSDCAAG…ASNSSRLHTC (75 aa). Residue Asn262 is glycosylated (N-linked (GlcNAc...) asparagine).

This sequence belongs to the dickkopf family. In terms of assembly, interacts (via the C-terminal Cys-rich domain) with LRP5 (via beta-propeller regions 3 and 4); the interaction, enhanced by MESD and or KREMEN, antagonizes Wnt-mediated signaling. Interacts with LRP6. Forms a ternary complex with LRP6 and KREM1. Interacts with KREM1.

The protein localises to the secreted. Functionally, antagonizes canonical Wnt signaling by inhibiting LRP5/6 interaction with Wnt and by forming a ternary complex with the transmembrane protein KREMEN that promotes internalization of LRP5/6. Inhibits the pro-apoptotic function of KREMEN1 in a Wnt-independent manner, and has anti-apoptotic activity. Plays a role in limb development; attenuates Wnt signaling in the developing limb to allow normal limb patterning. The chain is Dickkopf-related protein 1 (Dkk1) from Mus musculus (Mouse).